A 475-amino-acid chain; its full sequence is Flavin-dependent monooxygenase (475 aa).

The protein belongs to the aromatic-ring hydroxylase family. FAD is required as a cofactor.

The protein localises to the cytoplasm. The enzyme catalyses a tetracycline + NADPH + O2 + H(+) = an 11a-hydroxytetracycline + NADP(+) + H2O. The catalysed reaction is tetracycline + NADPH + O2 + H(+) = 11a-hydroxytetracycline + NADP(+) + H2O. Inhibited by anhydrotetracycline. In terms of biological role, an FAD-requiring monooxygenase active on some tetracycline antibiotic derivatives, which leads to their inactivation. Hydroxylates carbon 11a of tetracycline and some analogs. Confers resistance to tetracycline and doxycycline via an oxidoreductase activity; probably monooxygenates the antibiotics. Does not act on tigecycline. The chain is Flavin-dependent monooxygenase from Mycobacteroides abscessus (strain ATCC 19977 / DSM 44196 / CCUG 20993 / CIP 104536 / JCM 13569 / NCTC 13031 / TMC 1543 / L948) (Mycobacterium abscessus).